Consider the following 856-residue polypeptide: Paladin (856 aa).

Low complexity predominate over residues 1 to 16 (MGTTASTAQQTVSAGT). The interval 1–29 (MGTTASTAQQTVSAGTPFEGLQGSGTMDS) is disordered. Gly-2 carries N-myristoyl glycine lipidation. Ser-86 is modified (phosphoserine).

This sequence belongs to the paladin family. As to expression, expressed in endothelial cells, and in certain larger vessels, in mural cells. In the brain, possibly expressed in microglia. Expressed in peripheral blood mononuclear cells (at protein level).

It is found in the cytoplasm. The protein localises to the cytosol. The polypeptide is Paladin (PALD1) (Homo sapiens (Human)).